The chain runs to 578 residues: MPRGLELLIAQTILQGFDAQYGRFLEVTSGAQQRFEQADWHAVQQAMKNRIHLYDHHVGLVVEQLRCITNGQSTDAAFLLRVKEHYTRLLPDYPRFEIAESFFNSVYCRLFDHRSLTPERLFIFSSQPERRFRTIPRPLAKDFHPDHGWESLLMRVISDLPLRLRWQNKSRDIHYIIRHLTETLGTDNLAESHLQVANELFYRNKAAWLVGKLITPSGTLPFLLPIHQTDDGELFIDTCLTTTAEASIVFGFARSYFMVYAPLPAALVEWLREILPGKTTAELYMAIGCQKHAKTESYREYLVYLQGCNEQFIEAPGIRGMVMLVFTLPGFDRVFKVIKDRFAPQKEMSAAHVRACYQLVKEHDRVGRMADTQEFENFVLEKRHISPALMELLLQEAAEKITDLGEQIVIRHLYIERRMVPLNIWLEQVEGQQLRDAIEEYGNAIRQLAAANIFPGDMLFKNFGVTRHGRVVFYDYDEICYMTEVNFRDIPPPRYPEDELASEPWYSVSPGDVFPEEFRHWLCADPRIGPLFEEMHADLFRADYWRALQNRIREGHVEDVYAYRRRQRFSVRYGEMLF.

ATP contacts are provided by residues 315–321 and K336; that span reads APGIRGM. Residue D371 is part of the active site.

Belongs to the AceK family.

Its subcellular location is the cytoplasm. The enzyme catalyses L-seryl-[isocitrate dehydrogenase] + ATP = O-phospho-L-seryl-[isocitrate dehydrogenase] + ADP + H(+). Bifunctional enzyme which can phosphorylate or dephosphorylate isocitrate dehydrogenase (IDH) on a specific serine residue. This is a regulatory mechanism which enables bacteria to bypass the Krebs cycle via the glyoxylate shunt in response to the source of carbon. When bacteria are grown on glucose, IDH is fully active and unphosphorylated, but when grown on acetate or ethanol, the activity of IDH declines drastically concomitant with its phosphorylation. This Escherichia coli (strain K12 / MC4100 / BW2952) protein is Isocitrate dehydrogenase kinase/phosphatase.